Here is a 2200-residue protein sequence, read N- to C-terminus: Tyrosine-protein phosphatase Lar-like (2200 aa).

A signal peptide spans 1-42 (MIQFRNKNNSMNRIARHLRNVARRKGSSLLLFLMLSTVLVAA). N-linked (GlcNAc...) asparagine glycans are attached at residues N8 and N116. Over 43–1497 (KEDDPARLVV…LRGASQKSSP (1455 aa)) the chain is Extracellular. 3 Ig-like C2-type domains span residues 47–139 (PARL…ASLT), 151–240 (PQIE…KAAN), and 250–334 (PYFS…TTVI). Disulfide bonds link C69/C122 and C172/C225. Residues N269 and N315 are each glycosylated (N-linked (GlcNAc...) asparagine). A disulfide bond links C272 and C318. Fibronectin type-III domains follow at residues 341-434 (PPVN…TKPS), 439-535 (APVS…TRQG), 539-628 (QPPM…TIAS), 633-748 (SPTI…TLED), 752-856 (APRN…IPPE), 857-956 (APEI…PVGS), 957-1053 (PDGE…PDPA), 1058-1158 (PPTN…NYMT), and 1181-1287 (MVQN…TGPP). N574 carries an N-linked (GlcNAc...) asparagine glycan. Residues N945, N988, N1069, N1141, N1212, and N1330 are each glycosylated (N-linked (GlcNAc...) asparagine). The interval 1355–1392 (LARSLSVSPSKKLKRKASEVGDDSQSASYHPKEKRARR) is disordered. The chain crosses the membrane as a helical span at residues 1498–1518 (WVGACIAFLVLFSIVGMLICW). The Cytoplasmic segment spans residues 1519-2200 (WLRCNKKSAG…EYLAAYDNFS (682 aa)). 2 Tyrosine-protein phosphatase domains span residues 1647-1902 (FQSE…VLDA) and 1933-2192 (IDME…AYEY). Substrate contacts are provided by residues D1811, 1843–1849 (CSAGIGR), and Q1887. The Phosphocysteine intermediate role is filled by C1843. The Phosphocysteine intermediate role is filled by C2133.

Belongs to the protein-tyrosine phosphatase family. Receptor class 2A subfamily. In terms of tissue distribution, both isoforms are ubiquitously expressed in early embryos. In later embryos, larvae and adults expression is highest in the nerve ring, dorsal cord, ventral cord and epithelial tissues.

It localises to the cell junction. The protein localises to the adherens junction. It is found in the cell membrane. It catalyses the reaction O-phospho-L-tyrosyl-[protein] + H2O = L-tyrosyl-[protein] + phosphate. Has a role in early neural and epidermal development; neuroblast movements during closure of the gastrulation cleft and epidermal morphogenesis. Vab-1 and ptp-3 may function redundantly within the same sets of neuronal precursors. The polypeptide is Tyrosine-protein phosphatase Lar-like (ptp-3) (Caenorhabditis elegans).